Here is a 54-residue protein sequence, read N- to C-terminus: uncharacterized protein (54 aa).

Positions 1 to 28 (MDRKKDEIQRKYREQMREKKEREKEDGS) are enriched in basic and acidic residues. Residues 1-29 (MDRKKDEIQRKYREQMREKKEREKEDGSS) form a disordered region. Residues 31–51 (TFEIVVVLAIIILMFFFNSVF) form a helical membrane-spanning segment.

The protein resides in the cell membrane. This is an uncharacterized protein from Bacillus subtilis (strain 168).